Reading from the N-terminus, the 321-residue chain is Malate dehydrogenase (321 aa).

NAD(+)-binding positions include 10-15 and D34; that span reads GSGMIG. Residues R83 and R89 each contribute to the substrate site. Residues N96 and 119–121 each bind NAD(+); that span reads ITN. Residues N121 and R152 each coordinate substrate. Catalysis depends on H176, which acts as the Proton acceptor.

It belongs to the LDH/MDH superfamily. MDH type 3 family.

The enzyme catalyses (S)-malate + NAD(+) = oxaloacetate + NADH + H(+). Its function is as follows. Catalyzes the reversible oxidation of malate to oxaloacetate. The sequence is that of Malate dehydrogenase from Sinorhizobium fredii (strain NBRC 101917 / NGR234).